A 290-amino-acid chain; its full sequence is Homeobox protein EMX1 (290 aa).

Positions 192–251 (PKRIRTAFSPSQLLRLERAFEKNHYVVGAERKQLAGSLSLSETQVKVWFQNRRTKYKRQK) form a DNA-binding region, homeobox. The disordered stretch occupies residues 249–290 (RQKLEEEGPESEQKKKGSHHINRWRIATKQANGEDIDVTSND). Positions 250–263 (QKLEEEGPESEQKK) are enriched in basic and acidic residues.

The protein belongs to the EMX homeobox family. As to quaternary structure, interacts with WRD11 (via the N-terminal and the central portion of the protein); the interaction associates EMX1 with GLI3. Cerebral cortex.

It is found in the nucleus. The protein resides in the cytoplasm. Transcription factor, which in cooperation with EMX2, acts to generate the boundary between the roof and archipallium in the developing brain. May function in combinations with OTX1/2 to specify cell fates in the developing central nervous system. The chain is Homeobox protein EMX1 from Homo sapiens (Human).